Reading from the N-terminus, the 220-residue chain is Splicing factor U2AF 26 kDa subunit (220 aa).

Alanine 2 is modified (N-acetylalanine). The C3H1-type 1 zinc finger occupies 12 to 40 (EKDKVNCSFYFKIGACRHGDRCSRLHNKP). In terms of domain architecture, RRM spans 65–147 (SHCHVSDVEV…QAVHAELSPV (83 aa)). The segment at 149–176 (DFRESCCRQYEMGECTRGGFCNFMHLRP) adopts a C3H1-type 2 zinc-finger fold. The tract at residues 186-220 (YGRGPRHRSPPRSHTGHRPRERNRRRSPDHRHGRF) is disordered. Positions 189–220 (GPRHRSPPRSHTGHRPRERNRRRSPDHRHGRF) are enriched in basic residues.

The protein belongs to the splicing factor SR family. In terms of assembly, interacts with GFI1, U2AF2 and C1QBP. Isoform 3 interacts with PER1. Isoform 3 is rapidly degraded by a proteasome-mediated degradation pathway. Ubiquitous. Highly expressed in the brain.

It localises to the nucleus. The protein localises to the nucleus speckle. It is found in the cytoplasm. Functionally, RNA-binding protein that function as a pre-mRNA splicing factor. Plays a critical role in both constitutive and enhancer-dependent splicing by mediating protein-protein interactions and protein-RNA interactions required for accurate 3'-splice site selection. It can functionally substitute for U2AF1 in constitutive splicing and enhancer-dependent splicing. Acts by enhancing the binding of U2AF2 to weak pyrimidine tracts. Also participates in the regulation of alternative pre-mRNA splicing. Activates exon 5 skipping of PTPRC during T-cell activation; an event reversed by GFI1. Binds to RNA at the AG dinucleotide at the 3'-splice site. Shows a preference for AGC or AGA. Alternative splicing of U2AF1L4 may play a role in connecting the circadian rhythm to changing external cues: may provide a circadian buffering system in central and periphery clocks that allows synchronized adaption to clock-resetting stimuli in order to prevent potentially pathogenic desynchronization. The protein is Splicing factor U2AF 26 kDa subunit (U2af1l4) of Mus musculus (Mouse).